Consider the following 501-residue polypeptide: Sugar phosphate exchanger 3 (501 aa).

The chain crosses the membrane as a helical span at residues 20-40 (CTHHHIVVFLLTFFSYSLLHA). N62 is a glycosylation site (N-linked (GlcNAc...) asparagine). 5 helical membrane passes run 87–107 (TLFLGTLDTIFLFSYAVGLFV), 119–139 (WVLSFGMCSSALVVFFFGTLT), 153–173 (LWVVNGLLQSTGWPCVVAVMG), 183–203 (FVFGLWSACASVGNILGAFLA), and 214–234 (AFLVTASVQFAGGVIVFCGLL). N273 carries N-linked (GlcNAc...) asparagine glycosylation. 6 helical membrane-spanning segments follow: residues 298–320 (GVVLYSLAYACLKLVNYSFFFWL), 340–360 (IWYDVGGIIGGTIQGLISDVL), 364–384 (APVLAISLLFAVGSLFGYSRS), 393–413 (VIMAITGFFIGGPSNMISSAI), 435–455 (GIVDGTGSIGAAVGQYLVSLI), and 459–479 (LGWMWVFYFFILMASSTILFI).

It belongs to the major facilitator superfamily. Organophosphate:Pi antiporter (OPA) (TC 2.A.1.4) family.

The protein localises to the endoplasmic reticulum membrane. It is found in the lysosome membrane. Functionally, unlike the other SLC37 members, seems to lack glucose-6-phosphate antiporter activity. The protein is Sugar phosphate exchanger 3 (SLC37A3) of Gallus gallus (Chicken).